Reading from the N-terminus, the 123-residue chain is Large ribosomal subunit protein uL18 (123 aa).

The protein belongs to the universal ribosomal protein uL18 family. As to quaternary structure, part of the 50S ribosomal subunit; part of the 5S rRNA/L5/L18/L25 subcomplex. Contacts the 5S and 23S rRNAs.

This is one of the proteins that bind and probably mediate the attachment of the 5S RNA into the large ribosomal subunit, where it forms part of the central protuberance. The polypeptide is Large ribosomal subunit protein uL18 (Chlamydia caviae (strain ATCC VR-813 / DSM 19441 / 03DC25 / GPIC) (Chlamydophila caviae)).